A 159-amino-acid polypeptide reads, in one-letter code: Small ribosomal subunit protein uS5c (159 aa).

The region spanning 17 to 80 (WEERVVSVQR…TDGKKNVITV (64 aa)) is the S5 DRBM domain.

The protein belongs to the universal ribosomal protein uS5 family. Part of the 30S ribosomal subunit. Contacts protein S4.

It is found in the plastid. The protein localises to the chloroplast. In terms of biological role, with S4 and S12 plays an important role in translational accuracy. The polypeptide is Small ribosomal subunit protein uS5c (rps5) (Emiliania huxleyi (Coccolithophore)).